Reading from the N-terminus, the 97-residue chain is Exodeoxyribonuclease 7 small subunit (97 aa).

The segment at 1–22 is disordered; sequence MAKTASPGATPPGNGTEPLPDN.

Belongs to the XseB family. In terms of assembly, heterooligomer composed of large and small subunits.

It is found in the cytoplasm. It catalyses the reaction Exonucleolytic cleavage in either 5'- to 3'- or 3'- to 5'-direction to yield nucleoside 5'-phosphates.. Bidirectionally degrades single-stranded DNA into large acid-insoluble oligonucleotides, which are then degraded further into small acid-soluble oligonucleotides. This Burkholderia lata (strain ATCC 17760 / DSM 23089 / LMG 22485 / NCIMB 9086 / R18194 / 383) protein is Exodeoxyribonuclease 7 small subunit.